A 179-amino-acid polypeptide reads, in one-letter code: Replication restart protein DnaT (179 aa).

The tract at residues Gly-156–Gly-179 is disordered.

It belongs to the DnaT family. In terms of assembly, homooligomerizes. Interacts with PriB. Component of the replication restart primosome. Primosome assembly occurs via a 'hand-off' mechanism. PriA binds to replication forks, subsequently PriB then DnaT bind; DnaT then displaces ssDNA to generate the helicase loading substrate.

Its function is as follows. Involved in the restart of stalled replication forks, which reloads the replicative helicase on sites other than the origin of replication. Can function in multiple replication restart pathways. Displaces ssDNA from a PriB-ssDNA complex. Probably forms a spiral filament on ssDNA. This is Replication restart protein DnaT from Escherichia coli O7:K1 (strain IAI39 / ExPEC).